Consider the following 205-residue polypeptide: Holliday junction branch migration complex subunit RuvA (205 aa).

Residues 1 to 64 are domain I; that stretch reads MIGRLRGIIL…EDAQLLFGFN (64 aa). The segment at 65 to 142 is domain II; the sequence is DKQERALFRE…KGLSGDLFNP (78 aa). The tract at residues 143–156 is flexible linker; it reads VSDIPLASPASAES. The domain III stretch occupies residues 157 to 205; that stretch reads RASDPEAEAAAALVALGYKPQEASRMISKIARPEADCETLIRDALRAAL.

Belongs to the RuvA family. Homotetramer. Forms an RuvA(8)-RuvB(12)-Holliday junction (HJ) complex. HJ DNA is sandwiched between 2 RuvA tetramers; dsDNA enters through RuvA and exits via RuvB. An RuvB hexamer assembles on each DNA strand where it exits the tetramer. Each RuvB hexamer is contacted by two RuvA subunits (via domain III) on 2 adjacent RuvB subunits; this complex drives branch migration. In the full resolvosome a probable DNA-RuvA(4)-RuvB(12)-RuvC(2) complex forms which resolves the HJ.

The protein resides in the cytoplasm. In terms of biological role, the RuvA-RuvB-RuvC complex processes Holliday junction (HJ) DNA during genetic recombination and DNA repair, while the RuvA-RuvB complex plays an important role in the rescue of blocked DNA replication forks via replication fork reversal (RFR). RuvA specifically binds to HJ cruciform DNA, conferring on it an open structure. The RuvB hexamer acts as an ATP-dependent pump, pulling dsDNA into and through the RuvAB complex. HJ branch migration allows RuvC to scan DNA until it finds its consensus sequence, where it cleaves and resolves the cruciform DNA. The chain is Holliday junction branch migration complex subunit RuvA from Pectobacterium carotovorum subsp. carotovorum (strain PC1).